Reading from the N-terminus, the 550-residue chain is Chaperonin GroEL (550 aa).

ATP is bound by residues 29–32 (TLGP), Lys-50, 86–90 (DGTTT), Gly-414, and Asp-495.

Belongs to the chaperonin (HSP60) family. In terms of assembly, forms a cylinder of 14 subunits composed of two heptameric rings stacked back-to-back. Interacts with the co-chaperonin GroES.

The protein localises to the cytoplasm. The catalysed reaction is ATP + H2O + a folded polypeptide = ADP + phosphate + an unfolded polypeptide.. Its function is as follows. Together with its co-chaperonin GroES, plays an essential role in assisting protein folding. The GroEL-GroES system forms a nano-cage that allows encapsulation of the non-native substrate proteins and provides a physical environment optimized to promote and accelerate protein folding. The chain is Chaperonin GroEL from Parvibaculum lavamentivorans (strain DS-1 / DSM 13023 / NCIMB 13966).